Here is a 122-residue protein sequence, read N- to C-terminus: Putative iron-sulfur cluster insertion protein ErpA (122 aa).

Iron-sulfur cluster is bound by residues Cys50, Cys114, and Cys116.

The protein belongs to the HesB/IscA family. As to quaternary structure, homodimer. Iron-sulfur cluster serves as cofactor.

Functionally, required for insertion of 4Fe-4S clusters. The polypeptide is Putative iron-sulfur cluster insertion protein ErpA (Cupriavidus metallidurans (strain ATCC 43123 / DSM 2839 / NBRC 102507 / CH34) (Ralstonia metallidurans)).